Consider the following 1211-residue polypeptide: Endoplasmic reticulum transmembrane helix translocase (1211 aa).

Over 1–23 the chain is Cytoplasmic; sequence MGSKALITSPDISSGQLYIKLPT. Residues 24-44 traverse the membrane as a helical segment; sequence FFHLYVWPFALFVYPYIGYVY. Residues 45–54 lie on the Lumenal side of the membrane; it reads QNKLYSEEVR. The chain crosses the membrane as a helical span at residues 55–75; the sequence is YLTYIAVGTIHALFWLAGEWN. Residues 76 to 191 are Cytoplasmic-facing; it reads TKVYCLMTCR…FDIPIPTFGT (116 aa). The interval 155–185 is A-domain; part 1; it reads TIGTLKKSTGLTNIQSEIFLYRYGKNCFDIP. Residues 192–212 traverse the membrane as a helical segment; the sequence is LFKEHAVAPFFVFQIFCCVLW. Topologically, residues 213 to 216 are lumenal; sequence CLDD. The chain crosses the membrane as a helical span at residues 217-237; that stretch reads YWYFSLFSMFMIIALECSVVW. At 238-397 the chain is on the cytoplasmic side; that stretch reads QRQRTLTEFR…EKVTANNRES (160 aa). An A-domain; part 2 region spans residues 250–388; it reads SIKPYEIQVY…LVRTMVFSSE (139 aa). A helical membrane pass occupies residues 398 to 418; sequence LYFILFLLVFAIAASGYVWHV. At 419–1057 the chain is on the lumenal side; the sequence is GSKTERSRYK…KERPQAGIFN (639 aa). The segment at 464–493 is P-domain; part 1; that stretch reads YIYCTEPFRIPLSGHLDICCFDKTGTLTEE. D485 acts as the 4-aspartylphosphate intermediate in catalysis. The Mg(2+) site is built by D485 and T487. ATP is bound by residues 485 to 487, F587, R644, D710, and 824 to 828; these read DKT and DGTND. The tract at residues 495–685 is N-domain; that stretch reads MVVQGIAGVN…FAGFLIFTSP (191 aa). The tract at residues 688-845 is P-domain; part 2; the sequence is EDARQTVQML…HVGVALLNAS (158 aa). D824 serves as a coordination point for Mg(2+). Residues 846-955 form an arm-like region; it reads EEDMLEMQER…NASDDEAPKL (110 aa). A P-domain; part 3 region spans residues 956–971; the sequence is KLGDASVAAPFTSKLA. Residues 1058–1078 form a helical membrane-spanning segment; that stretch reads TYIIGSVLGQFAIHIVTLIYI. The Cytoplasmic portion of the chain corresponds to 1079–1100; sequence TRVVYLYEDPLEKVDLEETFKP. Residues 1101 to 1121 form a helical membrane-spanning segment; sequence SLLNTAIYLLQLIQQVSTFAI. The Lumenal portion of the chain corresponds to 1122–1136; that stretch reads NYQGRPFREALSENK. The chain crosses the membrane as a helical span at residues 1137 to 1157; the sequence is GMYYGLLGIAFVAIAGVTEFS. The Cytoplasmic portion of the chain corresponds to 1158–1174; it reads PELNAKLQLVKMAYNFQ. Residues 1175 to 1195 traverse the membrane as a helical segment; the sequence is IQLLATMVVDYAACWIIEELM. Over 1196–1211 the chain is Lumenal; that stretch reads KKYFRDNKPKEIVLRN.

The protein belongs to the cation transport ATPase (P-type) (TC 3.A.3) family. Type V subfamily. Mg(2+) is required as a cofactor.

It is found in the endoplasmic reticulum membrane. It catalyses the reaction [protein]-with a C-terminal TM segment(out) + ATP + H2O = [protein]-with a C-terminal TM segment(in) + ADP + phosphate + H(+). Its function is as follows. Endoplasmic reticulum translocase required to remove mitochondrial transmembrane proteins mistargeted to the endoplasmic reticulum. Acts as a dislocase that mediates the ATP-dependent extraction of mislocalized mitochondrial transmembrane proteins from the endoplasmic reticulum membrane. Specifically binds mitochondrial tail-anchored transmembrane proteins: has an atypically large substrate-binding pocket that recognizes and binds moderately hydrophobic transmembranes with short hydrophilic lumenal domains. Involved in controlling nuclear calcium ion levels. Required for cytokinesis and stabilizing microtubules. Required for assembly of the forespore membrane. Involved in calcium transport to the endoplasmic reticulum. This Schizosaccharomyces pombe (strain 972 / ATCC 24843) (Fission yeast) protein is Endoplasmic reticulum transmembrane helix translocase.